The following is a 519-amino-acid chain: Cytochrome P450 52A12 (519 aa).

C467 is a heme binding site.

Belongs to the cytochrome P450 family. Heme is required as a cofactor.

The protein resides in the membrane. In terms of biological role, together with an NADPH cytochrome P450 the enzyme system catalyzes the terminal hydroxylation as the first step in the assimilation of alkanes and fatty acids. This chain is Cytochrome P450 52A12 (CYP52A12), found in Debaryomyces hansenii (Yeast).